We begin with the raw amino-acid sequence, 125 residues long: S-adenosylmethionine decarboxylase proenzyme (125 aa).

Serine 63 (schiff-base intermediate with substrate; via pyruvic acid) is an active-site residue. At serine 63 the chain carries Pyruvic acid (Ser); by autocatalysis. Residue histidine 68 is the Proton acceptor; for processing activity of the active site. The active-site Proton donor; for catalytic activity is the cysteine 83.

The protein belongs to the prokaryotic AdoMetDC family. Type 1 subfamily. In terms of assembly, heterotetramer of two alpha and two beta chains arranged as a dimer of alpha/beta heterodimers. Pyruvate is required as a cofactor. Is synthesized initially as an inactive proenzyme. Formation of the active enzyme involves a self-maturation process in which the active site pyruvoyl group is generated from an internal serine residue via an autocatalytic post-translational modification. Two non-identical subunits are generated from the proenzyme in this reaction, and the pyruvate is formed at the N-terminus of the alpha chain, which is derived from the carboxyl end of the proenzyme. The post-translation cleavage follows an unusual pathway, termed non-hydrolytic serinolysis, in which the side chain hydroxyl group of the serine supplies its oxygen atom to form the C-terminus of the beta chain, while the remainder of the serine residue undergoes an oxidative deamination to produce ammonia and the pyruvoyl group blocking the N-terminus of the alpha chain.

It carries out the reaction S-adenosyl-L-methionine + H(+) = S-adenosyl 3-(methylsulfanyl)propylamine + CO2. Its pathway is amine and polyamine biosynthesis; S-adenosylmethioninamine biosynthesis; S-adenosylmethioninamine from S-adenosyl-L-methionine: step 1/1. Its function is as follows. Catalyzes the decarboxylation of S-adenosylmethionine to S-adenosylmethioninamine (dcAdoMet), the propylamine donor required for the synthesis of the polyamines spermine and spermidine from the diamine putrescine. The polypeptide is S-adenosylmethionine decarboxylase proenzyme (Moorella thermoacetica (strain ATCC 39073 / JCM 9320)).